The following is an 80-amino-acid chain: Large ribosomal subunit protein bL31 (80 aa).

Residues Cys16, Cys18, Cys38, and Cys41 each coordinate Zn(2+).

The protein belongs to the bacterial ribosomal protein bL31 family. Type A subfamily. As to quaternary structure, part of the 50S ribosomal subunit. The cofactor is Zn(2+).

In terms of biological role, binds the 23S rRNA. This chain is Large ribosomal subunit protein bL31, found in Mycobacterium bovis (strain ATCC BAA-935 / AF2122/97).